A 155-amino-acid chain; its full sequence is Transcriptional repressor NrdR (155 aa).

A zinc finger spans residues 3–34 (CPNCHQNASRVIDSRPTDEGRTIRRRRECENC). The region spanning 49-139 (LLVIKNDGTR…IYRQFTDMSS (91 aa)) is the ATP-cone domain.

This sequence belongs to the NrdR family. Zn(2+) is required as a cofactor.

Its function is as follows. Negatively regulates transcription of bacterial ribonucleotide reductase nrd genes and operons by binding to NrdR-boxes. In Lactobacillus delbrueckii subsp. bulgaricus (strain ATCC 11842 / DSM 20081 / BCRC 10696 / JCM 1002 / NBRC 13953 / NCIMB 11778 / NCTC 12712 / WDCM 00102 / Lb 14), this protein is Transcriptional repressor NrdR.